A 636-amino-acid polypeptide reads, in one-letter code: Translation factor GUF1 homolog, chloroplastic (636 aa).

In terms of domain architecture, tr-type G spans 31-212 (NLARNFSIIA…AIVTKIPPPQ (182 aa)). Residues 40-47 (AHIDHGKS), 105-109 (DTPGH), and 159-162 (NKID) each bind GTP.

It belongs to the TRAFAC class translation factor GTPase superfamily. Classic translation factor GTPase family. LepA subfamily.

It localises to the plastid. Its subcellular location is the chloroplast. It carries out the reaction GTP + H2O = GDP + phosphate + H(+). Promotes chloroplast protein synthesis. May act as a fidelity factor of the translation reaction, by catalyzing a one-codon backward translocation of tRNAs on improperly translocated ribosomes. The sequence is that of Translation factor GUF1 homolog, chloroplastic from Oryza sativa subsp. indica (Rice).